The sequence spans 245 residues: Fibroblast growth factor 13 (245 aa).

The interval methionine 1–threonine 36 is disordered. The interval methionine 1–proline 62 is mediates targeting to the nucleus. Residues lysine 67–valine 201 are mediates interaction with sodium channels. The interval serine 157–glutamine 164 is tubulin-binding domain necessary and sufficient for tubulin-binding. Position 208 is a phosphoserine (serine 208). The disordered stretch occupies residues threonine 213–threonine 245. Polar residues predominate over residues phenylalanine 215–threonine 245.

This sequence belongs to the heparin-binding growth factors family. Interacts with SCN8A; regulates SCN8A activity. Interacts with SCN1A; may regulate SCN1A activity. Interacts with SCN5A; the interaction is direct and may regulate SNC5A density at membranes and function. May also interact with SCN2A and SCN11A. Interacts with MAPK8IP2; may regulate the MAPK8IP2 scaffolding activity. Post-translationally, may be phosphorylated. In terms of tissue distribution, detected in brain, eye and heart. In brain, the different isoforms display different patterns of expression. Expressed in brain and heart (at protein level). Isoform 3 is highly expressed in cardiac myocytes while isoform 1 is the most abundant in brain.

The protein localises to the cell projection. It is found in the filopodium. The protein resides in the growth cone. Its subcellular location is the dendrite. It localises to the cell membrane. The protein localises to the sarcolemma. It is found in the cytoplasm. The protein resides in the nucleus. In terms of biological role, microtubule-binding protein which directly binds tubulin and is involved in both polymerization and stabilization of microtubules. Through its action on microtubules, may participate to the refinement of axons by negatively regulating axonal and leading processes branching. Plays a crucial role in neuron polarization and migration in the cerebral cortex and the hippocampus. Regulates voltage-gated sodium channel transport and function. May also play a role in MAPK signaling. Required for the development of axonal initial segment-targeting inhibitory GABAergic synapses made by chandelier neurons. Its function is as follows. Seems not to be involved in neuroblast polarization and migration but regulates axon branching. The protein is Fibroblast growth factor 13 of Mus musculus (Mouse).